The following is a 189-amino-acid chain: Probable nicotinate-nucleotide adenylyltransferase (189 aa).

This sequence belongs to the NadD family.

The enzyme catalyses nicotinate beta-D-ribonucleotide + ATP + H(+) = deamido-NAD(+) + diphosphate. The protein operates within cofactor biosynthesis; NAD(+) biosynthesis; deamido-NAD(+) from nicotinate D-ribonucleotide: step 1/1. In terms of biological role, catalyzes the reversible adenylation of nicotinate mononucleotide (NaMN) to nicotinic acid adenine dinucleotide (NaAD). The protein is Probable nicotinate-nucleotide adenylyltransferase of Bacillus cereus (strain AH820).